The following is a 411-amino-acid chain: Pyridinium-3,5-bisthiocarboxylic acid mononucleotide nickel insertion protein (411 aa).

The protein belongs to the LarC family.

The enzyme catalyses Ni(II)-pyridinium-3,5-bisthiocarboxylate mononucleotide = pyridinium-3,5-bisthiocarboxylate mononucleotide + Ni(2+). Its function is as follows. Involved in the biosynthesis of a nickel-pincer cofactor ((SCS)Ni(II) pincer complex). Binds Ni(2+), and functions in nickel delivery to pyridinium-3,5-bisthiocarboxylic acid mononucleotide (P2TMN), to form the mature cofactor. Is thus probably required for the activation of nickel-pincer cofactor-dependent enzymes. The chain is Pyridinium-3,5-bisthiocarboxylic acid mononucleotide nickel insertion protein from Geobacillus kaustophilus (strain HTA426).